Here is a 97-residue protein sequence, read N- to C-terminus: Co-chaperonin GroES (97 aa).

Belongs to the GroES chaperonin family. Heptamer of 7 subunits arranged in a ring. Interacts with the chaperonin GroEL.

It localises to the cytoplasm. Functionally, together with the chaperonin GroEL, plays an essential role in assisting protein folding. The GroEL-GroES system forms a nano-cage that allows encapsulation of the non-native substrate proteins and provides a physical environment optimized to promote and accelerate protein folding. GroES binds to the apical surface of the GroEL ring, thereby capping the opening of the GroEL channel. The protein is Co-chaperonin GroES of Pseudomonas aeruginosa (strain LESB58).